A 638-amino-acid chain; its full sequence is Sodium- and chloride-dependent glycine transporter 1 (638 aa).

The segment at 1–29 is disordered; that stretch reads MAAAQGPVAPSSLEQNGAVPSEATKKDQN. The Cytoplasmic portion of the chain corresponds to 1 to 40; it reads MAAAQGPVAPSSLEQNGAVPSEATKKDQNLKRGNWGNQIE. 3 helical membrane-spanning segments follow: residues 41–61, 69–88, and 112–132; these read FVLT…FPYL, AFMF…LFFM, and GVGY…NVVI. The Extracellular portion of the chain corresponds to 133 to 219; sequence CIAFYYFFSS…DDIGNFGEVR (87 aa). 4 N-linked (GlcNAc...) asparagine glycosylation sites follow: N169, N172, N182, and N188. 9 helical membrane-spanning segments follow: residues 220–238, 247–264, 300–317, 329–350, 383–402, 431–449, 465–485, 506–525, and 544–562; these read LPLL…LCLI, VVYF…ILFI, IFYS…MASY, VIIS…FSIL, LPIS…LLGL, YVTL…PLTS, SFSL…IYGH, ICWR…FSVI, and IGFL…YALF. The Cytoplasmic portion of the chain corresponds to 563 to 638; sequence QFCRTDGDTL…GSSRFQDSRI (76 aa). The tract at residues 597–638 is disordered; it reads RYAPTTTPSPEDGLEVQPLHPDKAQIPMVGSNGSSRFQDSRI. T603 is modified (phosphothreonine). Residues S605 and S630 each carry the phosphoserine modification. Residues 627 to 638 are essential for interaction with EXOC1; that stretch reads SNGSSRFQDSRI. Polar residues predominate over residues 627 to 638; the sequence is SNGSSRFQDSRI.

It belongs to the sodium:neurotransmitter symporter (SNF) (TC 2.A.22) family. SLC6A9 subfamily. In terms of assembly, interacts with EXOC1; interaction increases the transporter capacity of SLC6A9 probably by promoting its insertion into the cell membrane. Interacts with EXOC3 and EXOC4.

It localises to the cell membrane. The enzyme catalyses glycine(out) + chloride(out) + 2 Na(+)(out) = glycine(in) + chloride(in) + 2 Na(+)(in). Sodium- and chloride-dependent glycine transporter which is essential for regulating glycine concentrations at inhibitory glycinergic synapses. The sequence is that of Sodium- and chloride-dependent glycine transporter 1 (SLC6A9) from Bos taurus (Bovine).